A 273-amino-acid polypeptide reads, in one-letter code: Ribosomal RNA small subunit methyltransferase A (273 aa).

Residues N20, L22, G47, E68, D90, and N110 each coordinate S-adenosyl-L-methionine.

Belongs to the class I-like SAM-binding methyltransferase superfamily. rRNA adenine N(6)-methyltransferase family. RsmA subfamily.

Its subcellular location is the cytoplasm. It carries out the reaction adenosine(1518)/adenosine(1519) in 16S rRNA + 4 S-adenosyl-L-methionine = N(6)-dimethyladenosine(1518)/N(6)-dimethyladenosine(1519) in 16S rRNA + 4 S-adenosyl-L-homocysteine + 4 H(+). In terms of biological role, specifically dimethylates two adjacent adenosines (A1518 and A1519) in the loop of a conserved hairpin near the 3'-end of 16S rRNA in the 30S particle. May play a critical role in biogenesis of 30S subunits. This is Ribosomal RNA small subunit methyltransferase A from Chlorobium luteolum (strain DSM 273 / BCRC 81028 / 2530) (Pelodictyon luteolum).